Reading from the N-terminus, the 284-residue chain is Bifunctional protein FolD (284 aa).

NADP(+)-binding positions include 166–168 (GAS) and Ile232.

Belongs to the tetrahydrofolate dehydrogenase/cyclohydrolase family. As to quaternary structure, homodimer.

It carries out the reaction (6R)-5,10-methylene-5,6,7,8-tetrahydrofolate + NADP(+) = (6R)-5,10-methenyltetrahydrofolate + NADPH. The catalysed reaction is (6R)-5,10-methenyltetrahydrofolate + H2O = (6R)-10-formyltetrahydrofolate + H(+). It functions in the pathway one-carbon metabolism; tetrahydrofolate interconversion. Catalyzes the oxidation of 5,10-methylenetetrahydrofolate to 5,10-methenyltetrahydrofolate and then the hydrolysis of 5,10-methenyltetrahydrofolate to 10-formyltetrahydrofolate. In Stutzerimonas stutzeri (strain A1501) (Pseudomonas stutzeri), this protein is Bifunctional protein FolD.